We begin with the raw amino-acid sequence, 191 residues long: 3-isopropylmalate dehydratase small subunit (191 aa).

Belongs to the LeuD family. LeuD type 1 subfamily. In terms of assembly, heterodimer of LeuC and LeuD.

The enzyme catalyses (2R,3S)-3-isopropylmalate = (2S)-2-isopropylmalate. The protein operates within amino-acid biosynthesis; L-leucine biosynthesis; L-leucine from 3-methyl-2-oxobutanoate: step 2/4. In terms of biological role, catalyzes the isomerization between 2-isopropylmalate and 3-isopropylmalate, via the formation of 2-isopropylmaleate. This is 3-isopropylmalate dehydratase small subunit from Lactococcus lactis subsp. cremoris (strain MG1363).